The sequence spans 286 residues: uncharacterized protein (286 aa).

This sequence belongs to the methyltransferase superfamily.

In terms of biological role, involved in osmoadaptation. This is an uncharacterized protein from Emericella nidulans (strain FGSC A4 / ATCC 38163 / CBS 112.46 / NRRL 194 / M139) (Aspergillus nidulans).